The primary structure comprises 542 residues: Protein lin-9 homolog (542 aa).

At Ala-2 the chain carries N-acetylalanine. A sufficient for interaction with RB1 region spans residues 2 to 296 (AELDQLPDES…QKQRPSRFFM (295 aa)). Residue Lys-21 forms a Glycyl lysine isopeptide (Lys-Gly) (interchain with G-Cter in SUMO2) linkage. Phosphoserine occurs at positions 65 and 95. Phosphothreonine occurs at positions 96 and 304. A phosphoserine mark is found at Ser-309 and Ser-321. A coiled-coil region spans residues 354-413 (MIKKEHIKKLREMNTEAEKLKSYSMPISIEFQRRYATIVLELEQLNKDLNKVLHKVQQYC).

Belongs to the lin-9 family. In terms of assembly, component of the DREAM complex (also named LINC complex) at least composed of E2F4, E2F5, LIN9, LIN37, LIN52, LIN54, MYBL1, MYBL2, RBL1, RBL2, RBBP4, TFDP1 and TFDP2. The complex exists in quiescent cells where it represses cell cycle-dependent genes. It dissociates in S phase when LIN9, LIN37, LIN52 and LIN54 form a subcomplex that binds to MYBL2. Interacts with RB1. Expressed in thymus and testis.

It localises to the nucleus. The protein resides in the nucleoplasm. Acts as a tumor suppressor. Inhibits DNA synthesis. Its ability to inhibit oncogenic transformation is mediated through its association with RB1. Plays a role in the expression of genes required for the G1/S transition. The protein is Protein lin-9 homolog (LIN9) of Homo sapiens (Human).